The following is a 452-amino-acid chain: Phosphoglucosamine mutase (452 aa).

The active-site Phosphoserine intermediate is serine 104. The Mg(2+) site is built by serine 104, aspartate 246, aspartate 248, and aspartate 250. Phosphoserine is present on serine 104.

This sequence belongs to the phosphohexose mutase family. Mg(2+) serves as cofactor. Activated by phosphorylation.

It catalyses the reaction alpha-D-glucosamine 1-phosphate = D-glucosamine 6-phosphate. In terms of biological role, catalyzes the conversion of glucosamine-6-phosphate to glucosamine-1-phosphate. The chain is Phosphoglucosamine mutase from Streptomyces griseus subsp. griseus (strain JCM 4626 / CBS 651.72 / NBRC 13350 / KCC S-0626 / ISP 5235).